A 215-amino-acid chain; its full sequence is NADH-quinone oxidoreductase subunit C (215 aa).

Belongs to the complex I 30 kDa subunit family. As to quaternary structure, NDH-1 is composed of 14 different subunits. Subunits NuoB, C, D, E, F, and G constitute the peripheral sector of the complex.

It is found in the cell inner membrane. It carries out the reaction a quinone + NADH + 5 H(+)(in) = a quinol + NAD(+) + 4 H(+)(out). In terms of biological role, NDH-1 shuttles electrons from NADH, via FMN and iron-sulfur (Fe-S) centers, to quinones in the respiratory chain. The immediate electron acceptor for the enzyme in this species is believed to be ubiquinone. Couples the redox reaction to proton translocation (for every two electrons transferred, four hydrogen ions are translocated across the cytoplasmic membrane), and thus conserves the redox energy in a proton gradient. The protein is NADH-quinone oxidoreductase subunit C of Dinoroseobacter shibae (strain DSM 16493 / NCIMB 14021 / DFL 12).